The chain runs to 120 residues: NAD(P)H-quinone oxidoreductase subunit 3, chloroplastic (120 aa).

3 helical membrane-spanning segments follow: residues 9–29 (IFWA…IISG), 64–84 (MFAL…PWAV), and 88–108 (VLGV…VVGS).

It belongs to the complex I subunit 3 family. NDH is composed of at least 16 different subunits, 5 of which are encoded in the nucleus.

The protein resides in the plastid. It localises to the chloroplast thylakoid membrane. It carries out the reaction a plastoquinone + NADH + (n+1) H(+)(in) = a plastoquinol + NAD(+) + n H(+)(out). It catalyses the reaction a plastoquinone + NADPH + (n+1) H(+)(in) = a plastoquinol + NADP(+) + n H(+)(out). In terms of biological role, NDH shuttles electrons from NAD(P)H:plastoquinone, via FMN and iron-sulfur (Fe-S) centers, to quinones in the photosynthetic chain and possibly in a chloroplast respiratory chain. The immediate electron acceptor for the enzyme in this species is believed to be plastoquinone. Couples the redox reaction to proton translocation, and thus conserves the redox energy in a proton gradient. This is NAD(P)H-quinone oxidoreductase subunit 3, chloroplastic from Nuphar advena (Common spatterdock).